The primary structure comprises 644 residues: Archaeal Lon protease (644 aa).

Residues 1 to 18 (MKTTIKNSRTQESVSYEG) show a composition bias toward polar residues. Residues 1–30 (MKTTIKNSRTQESVSYEGNETKKGTGETLS) are disordered. Residues 1-137 (MKTTIKNSRT…KARSQDEKKN (137 aa)) lie on the Cytoplasmic side of the membrane. 71–78 (GEPGVGKS) contacts ATP. The next 2 membrane-spanning stretches (helical) occupy residues 138–155 (LFMM…FMMN) and 156–171 (QFLA…FLAL). Topologically, residues 172 to 644 (QQFRPRTTVM…PSIMKKPAMH (473 aa)) are cytoplasmic. Residues 438 to 617 (GGEVGRVNGL…GDVLEHALIG (180 aa)) form the Lon proteolytic domain. Active-site residues include S524 and K567.

It belongs to the peptidase S16 family. Archaeal LonB subfamily. Homohexamer. Organized in a ring with a central cavity.

The protein localises to the cell membrane. ATP-dependent serine protease that mediates the selective degradation of mutant and abnormal proteins as well as certain short-lived regulatory proteins. Degrades polypeptides processively. This chain is Archaeal Lon protease, found in Methanothermobacter thermautotrophicus (strain ATCC 29096 / DSM 1053 / JCM 10044 / NBRC 100330 / Delta H) (Methanobacterium thermoautotrophicum).